The primary structure comprises 345 residues: NADPH dehydrogenase (345 aa).

FMN is bound at residue 23–26 (SPMC). Residue Y28 participates in substrate binding. 2 residues coordinate FMN: A60 and Q102. 164–167 (HGAH) contacts substrate. FMN contacts are provided by residues R215 and 307 to 308 (GR).

Belongs to the NADH:flavin oxidoreductase/NADH oxidase family. NamA subfamily. In terms of assembly, homotetramer. The cofactor is FMN.

It catalyses the reaction A + NADPH + H(+) = AH2 + NADP(+). Its function is as follows. Catalyzes the reduction of the double bond of an array of alpha,beta-unsaturated aldehydes and ketones. It also reduces the nitro group of nitroester and nitroaromatic compounds. It could have a role in detoxification processes. The polypeptide is NADPH dehydrogenase (Bacillus cereus (strain Q1)).